The primary structure comprises 874 residues: Alanine--tRNA ligase (874 aa).

Positions 562, 566, 664, and 668 each coordinate Zn(2+).

Belongs to the class-II aminoacyl-tRNA synthetase family. Requires Zn(2+) as cofactor.

The protein localises to the cytoplasm. It carries out the reaction tRNA(Ala) + L-alanine + ATP = L-alanyl-tRNA(Ala) + AMP + diphosphate. Its function is as follows. Catalyzes the attachment of alanine to tRNA(Ala) in a two-step reaction: alanine is first activated by ATP to form Ala-AMP and then transferred to the acceptor end of tRNA(Ala). Also edits incorrectly charged Ser-tRNA(Ala) and Gly-tRNA(Ala) via its editing domain. This is Alanine--tRNA ligase from Shewanella denitrificans (strain OS217 / ATCC BAA-1090 / DSM 15013).